The primary structure comprises 483 residues: MALCLWLFLVLPICCWCQGAVDLGDSGVFQPQSALTDMEFASVSTYRGPGNTDPRPNKELPILLWWSSNLFPHFPGDTERVDCAHSSCLVTSNRKVQLYRRTASIIFYGTDFRAYEAPLPRLPHQTWALFHEESPMNNYLLSHSVGIRLFNYTATFRRESDYPLTLQWLPSLDYLLAPTAISLQEKNHWRQAGLAPVLYMQSHCDVPSDRDRFVQELMKYIEIDSYGKCLNNKPLPEYLEDTSTATSEDRRFMSFVARYKFHLALENGLCPDYMTEKLWRPMHQGCVPIYRGSTTVADWLPNNHSAILVEDFSTPRELADFIKALDQDDVEYLRYLKYKTPSEITNLRLLEGLESREWGVNDMSKPNYLNGFECFVCDKENERLAARKAHRKNPKQNQPPQPKMANSSHMGCPLPSPGYGPVENVEPNDSWLQMWPQDYWQSLDQAEGLESLIRHNVSEPSLLWQHIQSIAVRRARGLSNDSR.

Met1 is a topological domain (cytoplasmic). Residues 2-21 form a helical; Signal-anchor for type II membrane protein membrane-spanning segment; it reads ALCLWLFLVLPICCWCQGAV. Topologically, residues 22 to 483 are lumenal; sequence DLGDSGVFQP…RARGLSNDSR (462 aa). Asn151 and Asn303 each carry an N-linked (GlcNAc...) asparagine glycan. An intrachain disulfide couples Cys374 to Cys377. The interval 387–425 is disordered; sequence RKAHRKNPKQNQPPQPKMANSSHMGCPLPSPGYGPVENV. N-linked (GlcNAc...) asparagine glycans are attached at residues Asn406, Asn428, Asn456, and Asn480.

It belongs to the glycosyltransferase 10 family.

The protein localises to the endoplasmic reticulum membrane. It catalyses the reaction L-threonyl-[protein] + GDP-beta-L-fucose = 3-O-(alpha-L-fucosyl)-L-threonyl-[protein] + GDP + H(+). The catalysed reaction is L-seryl-[protein] + GDP-beta-L-fucose = 3-O-(alpha-L-fucosyl)-L-seryl-[protein] + GDP + H(+). Its pathway is protein modification; protein glycosylation. In terms of biological role, protein O-fucosyltransferase that specifically catalyzes O-fucosylation of serine or threonine residues in EMI domains of target proteins. Attaches fucose through an O-glycosidic linkage. O-fucosylation of EMI domain-containing proteins may be required for facilitating protein folding and secretion. This is GDP-fucose protein O-fucosyltransferase 4 (fut11) from Danio rerio (Zebrafish).